Consider the following 273-residue polypeptide: MSVQTTKRRLSPASIEALKGERPIVSLTAYTTPIARLLDPHVDFLLVGDSLGMVLYGLDTTVGVTLDMMIAHGQAVMRGSERSCIVIDLPFGSYQESKEQAFRSAARILKETGCSAVKLEGGAEMAETVDFLVSRGIPVLGHVGLMPQLVNTTGGYRSVGRNEKEVAKIRRDAKAIDDAGAFAIVVEGTVEPVAREITATLRCPTIGIGASPACDGQILVSDDMLGIFNDFKPRFVKHFAELAPAISKAVEDYANEVKARTFPGIEHTFQVKR.

Residues Asp49 and Asp88 each coordinate Mg(2+). Residues 49-50 (DS), Asp88, and Lys118 each bind 3-methyl-2-oxobutanoate. Glu120 provides a ligand contact to Mg(2+). Glu187 acts as the Proton acceptor in catalysis.

This sequence belongs to the PanB family. In terms of assembly, homodecamer; pentamer of dimers. It depends on Mg(2+) as a cofactor.

Its subcellular location is the cytoplasm. The catalysed reaction is 3-methyl-2-oxobutanoate + (6R)-5,10-methylene-5,6,7,8-tetrahydrofolate + H2O = 2-dehydropantoate + (6S)-5,6,7,8-tetrahydrofolate. The protein operates within cofactor biosynthesis; (R)-pantothenate biosynthesis; (R)-pantoate from 3-methyl-2-oxobutanoate: step 1/2. Catalyzes the reversible reaction in which hydroxymethyl group from 5,10-methylenetetrahydrofolate is transferred onto alpha-ketoisovalerate to form ketopantoate. In Sinorhizobium fredii (strain NBRC 101917 / NGR234), this protein is 3-methyl-2-oxobutanoate hydroxymethyltransferase.